A 354-amino-acid polypeptide reads, in one-letter code: Holliday junction branch migration complex subunit RuvB (354 aa).

Positions methionine 1 to asparagine 10 are enriched in polar residues. Residues methionine 1–arginine 36 are disordered. Basic and acidic residues predominate over residues lysine 12–arginine 36. Residues proline 13–tyrosine 196 are large ATPase domain (RuvB-L). Residues isoleucine 35, arginine 36, glycine 77, lysine 80, threonine 81, threonine 82, glutamate 143–tyrosine 145, arginine 186, tyrosine 196, and arginine 233 each bind ATP. Threonine 81 is a Mg(2+) binding site. A small ATPAse domain (RuvB-S) region spans residues glutamate 197–glutamine 267. The segment at proline 270–glutamine 354 is head domain (RuvB-H). 2 residues coordinate DNA: arginine 325 and arginine 330.

Belongs to the RuvB family. As to quaternary structure, homohexamer. Forms an RuvA(8)-RuvB(12)-Holliday junction (HJ) complex. HJ DNA is sandwiched between 2 RuvA tetramers; dsDNA enters through RuvA and exits via RuvB. An RuvB hexamer assembles on each DNA strand where it exits the tetramer. Each RuvB hexamer is contacted by two RuvA subunits (via domain III) on 2 adjacent RuvB subunits; this complex drives branch migration. In the full resolvosome a probable DNA-RuvA(4)-RuvB(12)-RuvC(2) complex forms which resolves the HJ.

The protein localises to the cytoplasm. It catalyses the reaction ATP + H2O = ADP + phosphate + H(+). Functionally, the RuvA-RuvB-RuvC complex processes Holliday junction (HJ) DNA during genetic recombination and DNA repair, while the RuvA-RuvB complex plays an important role in the rescue of blocked DNA replication forks via replication fork reversal (RFR). RuvA specifically binds to HJ cruciform DNA, conferring on it an open structure. The RuvB hexamer acts as an ATP-dependent pump, pulling dsDNA into and through the RuvAB complex. RuvB forms 2 homohexamers on either side of HJ DNA bound by 1 or 2 RuvA tetramers; 4 subunits per hexamer contact DNA at a time. Coordinated motions by a converter formed by DNA-disengaged RuvB subunits stimulates ATP hydrolysis and nucleotide exchange. Immobilization of the converter enables RuvB to convert the ATP-contained energy into a lever motion, pulling 2 nucleotides of DNA out of the RuvA tetramer per ATP hydrolyzed, thus driving DNA branch migration. The RuvB motors rotate together with the DNA substrate, which together with the progressing nucleotide cycle form the mechanistic basis for DNA recombination by continuous HJ branch migration. Branch migration allows RuvC to scan DNA until it finds its consensus sequence, where it cleaves and resolves cruciform DNA. This chain is Holliday junction branch migration complex subunit RuvB, found in Crocosphaera subtropica (strain ATCC 51142 / BH68) (Cyanothece sp. (strain ATCC 51142)).